Here is a 313-residue protein sequence, read N- to C-terminus: Calcium homeostasis modulator protein 6 (313 aa).

At 1–21 the chain is on the cytoplasmic side; the sequence is MEKFKAVLDLQRKHRNALGYS. The helical transmembrane segment at 22 to 37 threads the bilayer; the sequence is LVTLLTAGGEKIFSSV. Over 38 to 46 the chain is Extracellular; it reads VFQCPCTAT. Disulfide bonds link Cys-41/Cys-125, Cys-43/Cys-154, and Cys-138/Cys-145. The helical transmembrane segment at 47–68 threads the bilayer; the sequence is WNLPYGLVFLLVPALALFLLGY. At 69-101 the chain is on the cytoplasmic side; that stretch reads ALSARTWRLLTGCCSRSARFSSGLRSAFVCAQL. The helical transmembrane segment at 102 to 126 threads the bilayer; sequence SMTAAFAPLTWVAVALLEGSFYQCA. Residues 127-167 lie on the Extracellular side of the membrane; it reads VSGSARLAPYLCKGRDPNCNATLPQAPCNKQKVEMQEILSQ. Residues 168–190 form a helical membrane-spanning segment; that stretch reads LKAQSQVFGWILIAAVIILLLLV. The Cytoplasmic portion of the chain corresponds to 191 to 313; the sequence is KSVTRCFSPV…DMSMTNTHEL (123 aa).

This sequence belongs to the CALHM family. As to quaternary structure, oligomerizes to form decameric and undecameric channels. In terms of processing, N-glycosylated. In terms of tissue distribution, immune cells in primary and secondary lymphoid organs.

Its subcellular location is the cell membrane. It carries out the reaction ATP(in) = ATP(out). With respect to regulation, inhibited by Gd(3+). Partially inhibited by divalent ions Ca(2+) and Ba(2+). Its function is as follows. Pore-forming subunit of an ATP-permeable channel. In response to pathogen-derived and proinflammatory stimuli, relocates from intracellular compartments to NK-dendritic cell and NK-macrophage immune synapses where it mediates ATP efflux and NK cell activation involved in antimicrobial and antitumor responses. May assemble to form gap junction channel-like structures with gating and ion conductance likely regulated by membrane lipids and voltage rather than by extracellular calcium levels. The polypeptide is Calcium homeostasis modulator protein 6 (Mus musculus (Mouse)).